The primary structure comprises 129 residues: uncharacterized protein (129 aa).

C2H2-type zinc fingers lie at residues 75-99 and 101-124; these read FVCP…YTEH and KVCP…CKKH.

In terms of biological role, essential for virus function. This is an uncharacterized protein from Saccharolobus solfataricus (Sulfolobus solfataricus).